The primary structure comprises 424 residues: COUP transcription factor 1 (424 aa).

A disordered region spans residues 1–82 (MAMVVSSWRD…QGPPGSGQSQ (82 aa)). Over residues 39–68 (EQQQQQAGSGAPHTPQTPGQPGAPATPGTA) the composition is skewed to low complexity. The segment at residues 84 to 159 (HIECVVCGDK…VGMRREAVQR (76 aa)) is a DNA-binding region (nuclear receptor). 2 NR C4-type zinc fingers span residues 87–107 (CVVCGDKSSGKHYGQFTCEGC) and 123–147 (CRANRNCPIDQHHRNQCQYCRLKKC). Positions 185 to 411 (YLSGYISLLL…TLIRDMLLSG (227 aa)) constitute an NR LBD domain.

It belongs to the nuclear hormone receptor family. NR2 subfamily. As to quaternary structure, binds DNA as dimer; homodimer and probable heterodimer with NR2F6. Interacts with GTF2B; this interaction is direct. Interacts with COPS2.

It is found in the nucleus. Functionally, coup (chicken ovalbumin upstream promoter) transcription factor binds to the ovalbumin promoter and, in conjunction with another protein (S300-II) stimulates initiation of transcription. Binds to both direct repeats and palindromes of the 5'-AGGTCA-3' motif. Represses transcriptional activity of LHCG. The protein is COUP transcription factor 1 (NR2F1) of Bos taurus (Bovine).